We begin with the raw amino-acid sequence, 412 residues long: MQIYLVGGAVRDQLLNLPIKDRDFLVVGATAKELINQGYQQVGADFPVFLHPVTQQEYALARQERKSGTGYTGFVCDFSPNVTLEQDLIRRDLTINAMAQDLTSGQIFDPFGGKTDLANRLLRHISDAFAEDPLRVLRVARFAARFHHLGFSIAEQTLELMQKMTACGELNHLTAERIWRETEKALHTESPHIYFQVLRKVNALAILFPEIDQLFGQIQSVKYHLETDRGQHTLLALQQAKLLVKQAHNPTALLWAVLCHDLGKDLISAEMLPHHYQPNVTGIQLTHQLADRLKVPTAVKELALLVNKYHTNCHKIAELDSERVLELFNQLDVWRKPQRLDDFLLACEADARARLGAEYCSYPQATLAIDYFNAANAVNVQAIIADGFKKQAIRDELNNRRINIIKQIKNAI.

ATP is bound by residues G8 and R11. Residues G8 and R11 each contribute to the CTP site. Mg(2+) is bound by residues D21 and D23. Residues R91, R138, and R141 each contribute to the ATP site. The CTP site is built by R91, R138, and R141. Positions 229–334 (RGQHTLLALQ…LELFNQLDVW (106 aa)) constitute an HD domain.

It belongs to the tRNA nucleotidyltransferase/poly(A) polymerase family. Bacterial CCA-adding enzyme type 1 subfamily. In terms of assembly, monomer. Can also form homodimers and oligomers. Mg(2+) is required as a cofactor. Requires Ni(2+) as cofactor.

It carries out the reaction a tRNA precursor + 2 CTP + ATP = a tRNA with a 3' CCA end + 3 diphosphate. The enzyme catalyses a tRNA with a 3' CCA end + 2 CTP + ATP = a tRNA with a 3' CCACCA end + 3 diphosphate. Functionally, catalyzes the addition and repair of the essential 3'-terminal CCA sequence in tRNAs without using a nucleic acid template. Adds these three nucleotides in the order of C, C, and A to the tRNA nucleotide-73, using CTP and ATP as substrates and producing inorganic pyrophosphate. tRNA 3'-terminal CCA addition is required both for tRNA processing and repair. Also involved in tRNA surveillance by mediating tandem CCA addition to generate a CCACCA at the 3' terminus of unstable tRNAs. While stable tRNAs receive only 3'-terminal CCA, unstable tRNAs are marked with CCACCA and rapidly degraded. This chain is Multifunctional CCA protein, found in Haemophilus ducreyi (strain 35000HP / ATCC 700724).